The sequence spans 73 residues: MTSLQVLSIISSFLTQGLPHPPHVAADSHYISKKDSISASVGRLTSLLPCLCALHAYGVGHRPFVIVDIFYAE.

This is an uncharacterized protein from Treponema pallidum (strain Nichols).